The following is a 575-amino-acid chain: V-type ATP synthase alpha chain (575 aa).

An ATP-binding site is contributed by 238 to 245; sequence GPFGAGKT.

The protein belongs to the ATPase alpha/beta chains family.

It catalyses the reaction ATP + H2O + 4 H(+)(in) = ADP + phosphate + 5 H(+)(out). Its function is as follows. Produces ATP from ADP in the presence of a proton gradient across the membrane. The V-type alpha chain is a catalytic subunit. The sequence is that of V-type ATP synthase alpha chain (atpA) from Borreliella burgdorferi (strain ATCC 35210 / DSM 4680 / CIP 102532 / B31) (Borrelia burgdorferi).